A 513-amino-acid polypeptide reads, in one-letter code: Ribonuclease Y (513 aa).

Residues 6–26 (YIIIAVVIIIICVILGLYVVD) traverse the membrane as a helical segment. Positions 203 to 288 (TVHVVNLPND…EMVEKAKKEV (86 aa)) constitute a KH domain. Residues 329–422 (VLKHSIEVSH…VQAADAISAA (94 aa)) form the HD domain.

This sequence belongs to the RNase Y family.

The protein localises to the cell membrane. In terms of biological role, endoribonuclease that initiates mRNA decay. This Clostridium botulinum (strain Langeland / NCTC 10281 / Type F) protein is Ribonuclease Y.